The following is a 201-amino-acid chain: Holliday junction branch migration complex subunit RuvA (201 aa).

The interval 1-63 (MISHFSGTVS…EESLTLYGFV (63 aa)) is domain I. Positions 64 to 142 (EADDRDAFEL…ALAPRGASAS (79 aa)) are domain II. The interval 143 to 153 (GATHVAAPWRE) is flexible linker. Positions 153-201 (EQVAEGLVGLGWSTKDAEKAVDKVVALKEADPAMSIGNLMRAALRSLAR) are domain III.

The protein belongs to the RuvA family. As to quaternary structure, homotetramer. Forms an RuvA(8)-RuvB(12)-Holliday junction (HJ) complex. HJ DNA is sandwiched between 2 RuvA tetramers; dsDNA enters through RuvA and exits via RuvB. An RuvB hexamer assembles on each DNA strand where it exits the tetramer. Each RuvB hexamer is contacted by two RuvA subunits (via domain III) on 2 adjacent RuvB subunits; this complex drives branch migration. In the full resolvosome a probable DNA-RuvA(4)-RuvB(12)-RuvC(2) complex forms which resolves the HJ.

The protein resides in the cytoplasm. Its function is as follows. The RuvA-RuvB-RuvC complex processes Holliday junction (HJ) DNA during genetic recombination and DNA repair, while the RuvA-RuvB complex plays an important role in the rescue of blocked DNA replication forks via replication fork reversal (RFR). RuvA specifically binds to HJ cruciform DNA, conferring on it an open structure. The RuvB hexamer acts as an ATP-dependent pump, pulling dsDNA into and through the RuvAB complex. HJ branch migration allows RuvC to scan DNA until it finds its consensus sequence, where it cleaves and resolves the cruciform DNA. In Cutibacterium acnes (strain DSM 16379 / KPA171202) (Propionibacterium acnes), this protein is Holliday junction branch migration complex subunit RuvA.